We begin with the raw amino-acid sequence, 481 residues long: Cholesterol 16,22-dihydroxylase CYP90G4 (481 aa).

A helical membrane pass occupies residues 4–24; it reads SYLSFFVLSSILVLTLIFFFM. Residue cysteine 426 coordinates heme.

Belongs to the cytochrome P450 family. As to expression, mainly expressed in leaves and seed pods and, at low levels, in flowers and stems.

The protein localises to the membrane. It functions in the pathway steroid metabolism; cholesterol metabolism. Functionally, involved in the biosynthesis of spiroketal steroid and saponin natural products from cholesterol such as diosgenin and analogs (e.g. furostanol and spirostanol), plant defense compounds used as main precursors for the industrial production of steroid hormones. During the 5,6-spiroketalization of cholesterol, catalyzes the hydroxylation of cholesterol to form 16S,22S-dihydroxycholesterol and, possibly, the subsequent conversion of 16S,22S-dihydroxycholesterol into 16-oxo-22-hydroxy-cholesterol and 16-hydroxy-22-oxo-cholesterol. 16-hydroxy-22-oxo-cholesterol submit a spontaneous reaction leading to the production of furostanol-type steroid diastereomers, precursors of diosgenin. This Trigonella foenum-graecum (Fenugreek) protein is Cholesterol 16,22-dihydroxylase CYP90G4.